Here is a 156-residue protein sequence, read N- to C-terminus: Arginine repressor (156 aa).

Belongs to the ArgR family.

The protein resides in the cytoplasm. It functions in the pathway amino-acid biosynthesis; L-arginine biosynthesis [regulation]. Its function is as follows. Regulates arginine biosynthesis genes. In Shewanella sp. (strain ANA-3), this protein is Arginine repressor.